The primary structure comprises 152 residues: Snaclec lebecin subunit alpha (152 aa).

An N-terminal signal peptide occupies residues 1 to 23 (MGRSISVSFGLLVVFLSLSGTGA). 3 disulfide bridges follow: Cys27–Cys38, Cys54–Cys147, and Cys122–Cys139. In terms of domain architecture, C-type lectin spans 34 to 148 (YEGGCYYVFD…CELAYHFICS (115 aa)).

As to quaternary structure, heterodimer with the beta subunit (AC W5XCJ6); disulfide-linked. In terms of tissue distribution, expressed by the venom gland.

It localises to the secreted. In terms of biological role, inhibits human breast cancer cells (MDA-MB231) migration and proliferation, as well as their adhesion to fibrinogen and fibronectin. This inhibition may be due to the binding to receptors of the integrin family, probably alpha-v/beta-3 (ITGAV/ITGB3) (40% inhibition of cell adhesion) and alpha-5/beta-1 (ITGA5/ITGB1) (by comparison with lebectin). The chain is Snaclec lebecin subunit alpha from Macrovipera lebetinus (Levantine viper).